The chain runs to 190 residues: Small ribosomal subunit protein uS4c (190 aa).

In terms of domain architecture, S4 RNA-binding spans 92 to 152 (RLDHVVYRAG…KSPSSAQLPP (61 aa)).

This sequence belongs to the universal ribosomal protein uS4 family. Part of the 30S ribosomal subunit. Contacts protein S5. The interaction surface between S4 and S5 is involved in control of translational fidelity.

Its subcellular location is the plastid. It is found in the chloroplast. Its function is as follows. One of the primary rRNA binding proteins, it binds directly to 16S rRNA where it nucleates assembly of the body of the 30S subunit. Functionally, with S5 and S12 plays an important role in translational accuracy. This Cyanidioschyzon merolae (strain NIES-3377 / 10D) (Unicellular red alga) protein is Small ribosomal subunit protein uS4c (rps4).